The primary structure comprises 251 residues: uncharacterized protein (251 aa).

Belongs to the FAM243 family.

This is an uncharacterized protein from Mus musculus (Mouse).